The primary structure comprises 238 residues: CD63 antigen (238 aa).

The Cytoplasmic portion of the chain corresponds to 2 to 11 (AVEGGMKCVK). A helical transmembrane segment spans residues 12–32 (FLLYVLLLAFCACAVGLIAVG). The Extracellular segment spans residues 33–51 (VGAQLVLSQTIIQGATPGS). Residues 52 to 72 (LLPVVIIAVGVFLFLVAFVGC) traverse the membrane as a helical segment. Over 73 to 81 (CGACKENYC) the chain is Cytoplasmic. The chain crosses the membrane as a helical span at residues 82–102 (LMITFAIFLSLIMLVEVAAAI). Residues 103–203 (AGYVFRDKVM…KIGGWLRKNV (101 aa)) are Extracellular-facing. N130, N150, and N172 each carry an N-linked (GlcNAc...) asparagine glycan. Residues 204–224 (LVVAAAALGIAFVEVLGIVFA) traverse the membrane as a helical segment. Topologically, residues 225 to 238 (CCLVKSIRSGYEVM) are cytoplasmic. Residues 234–238 (GYEVM) carry the Lysosomal targeting motif motif.

This sequence belongs to the tetraspanin (TM4SF) family. Interacts with TIMP1 and ITGB1 and recruits TIMP1 to ITGB1. Interacts with CD9. Identified in a complex with CD9 and ITGB3. Interacts with PMEL. Interacts with KDR/VEGFR2; identified in a complex with ITGB1 and KDR/VEGFR2 and is required to recruit KDR to ITGB1 complexes. Interacts with SYT7. Palmitoylated at a low, basal level in unstimulated platelets. The level of palmitoylation increases when platelets are activated by thrombin (in vitro). In terms of tissue distribution, detected in platelets (at protein level). Dysplastic nevi, radial growth phase primary melanomas, hematopoietic cells, tissue macrophages.

The protein resides in the cell membrane. The protein localises to the lysosome membrane. It localises to the late endosome membrane. It is found in the endosome. Its subcellular location is the multivesicular body. The protein resides in the melanosome. The protein localises to the secreted. It localises to the extracellular exosome. It is found in the cell surface. Functions as a cell surface receptor for TIMP1 and plays a role in the activation of cellular signaling cascades. Plays a role in the activation of ITGB1 and integrin signaling, leading to the activation of AKT, FAK/PTK2 and MAP kinases. Promotes cell survival, reorganization of the actin cytoskeleton, cell adhesion, spreading and migration, via its role in the activation of AKT and FAK/PTK2. Plays a role in VEGFA signaling via its role in regulating the internalization of KDR/VEGFR2. Plays a role in intracellular vesicular transport processes, and is required for normal trafficking of the PMEL luminal domain that is essential for the development and maturation of melanocytes. Plays a role in the adhesion of leukocytes onto endothelial cells via its role in the regulation of SELP trafficking. May play a role in mast cell degranulation in response to Ms4a2/FceRI stimulation, but not in mast cell degranulation in response to other stimuli. The chain is CD63 antigen (CD63) from Homo sapiens (Human).